Consider the following 54-residue polypeptide: Photoreceptor disk component PRCD (54 aa).

Cys2 carries the S-palmitoyl cysteine lipid modification. The disordered stretch occupies residues 24–54 (QPEPNGVDGAVSGSSLETDLQSSGREKEPLK). Over residues 35 to 46 (SGSSLETDLQSS) the composition is skewed to polar residues.

It belongs to the PRCD family. As to quaternary structure, interacts with RHO/rhodopsin; the interaction promotes PRCD stability. Palmitoylated at Cys-2. Palmitoylation is essential for protein stability and trafficking to the photoreceptor outer segment, but does not appear to be essential for membrane localization. Probably palmitoylated by ZDHHC3. In terms of processing, phosphorylated. As to expression, expressed in retina (at protein level).

Its subcellular location is the cell projection. It is found in the cilium. It localises to the photoreceptor outer segment. The protein resides in the membrane. The protein localises to the endoplasmic reticulum. Its subcellular location is the golgi apparatus. Its function is as follows. Involved in vision. The polypeptide is Photoreceptor disk component PRCD (Bos taurus (Bovine)).